We begin with the raw amino-acid sequence, 309 residues long: Transcription initiation factor IIB 1 (309 aa).

2 consecutive repeat copies span residues 125 to 208 (NELE…LREL) and 219 to 300 (DYVT…ELTQ).

The protein belongs to the TFIIB family.

Stabilizes TBP binding to an archaeal box-A promoter. Also responsible for recruiting RNA polymerase II to the pre-initiation complex (DNA-TBP-TFIIB). This Saccharolobus solfataricus (strain ATCC 35092 / DSM 1617 / JCM 11322 / P2) (Sulfolobus solfataricus) protein is Transcription initiation factor IIB 1.